A 179-amino-acid chain; its full sequence is Probable chemoreceptor glutamine deamidase CheD 2 (179 aa).

The protein belongs to the CheD family.

The enzyme catalyses L-glutaminyl-[protein] + H2O = L-glutamyl-[protein] + NH4(+). In terms of biological role, probably deamidates glutamine residues to glutamate on methyl-accepting chemotaxis receptors (MCPs), playing an important role in chemotaxis. The chain is Probable chemoreceptor glutamine deamidase CheD 2 from Ruegeria sp. (strain TM1040) (Silicibacter sp.).